The chain runs to 284 residues: Tropomyosin Per a 7.0103 (284 aa).

A coiled-coil region spans residues 1–266 (MDAIKKKMQA…EDELVHEKEK (266 aa)).

It belongs to the tropomyosin family. In terms of assembly, homodimer.

Its function is as follows. Tropomyosin, in association with the troponin complex, plays a central role in the calcium dependent regulation of muscle contraction. This is Tropomyosin Per a 7.0103 from Periplaneta americana (American cockroach).